Reading from the N-terminus, the 1025-residue chain is Multidrug resistance protein MdtC (1025 aa).

The next 12 helical transmembrane spans lie at 15-35, 333-353, 360-380, 387-407, 431-451, 469-489, 528-548, 851-871, 875-895, 897-917, 953-973, and 984-1004; these read ILIS…LPVA, EVEQ…FLFL, LIPA…MYLC, LSLM…IVVL, VGFT…PLLL, VAIG…CGWL, LTGL…ISIP, AQVI…GMLY, VHPL…LLAL, IFDA…IGIV, PIMM…LSGG, and ITIV…TPVV.

It belongs to the resistance-nodulation-cell division (RND) (TC 2.A.6) family. MdtC subfamily. As to quaternary structure, part of a tripartite efflux system composed of MdtA, MdtB and MdtC. MdtC forms a heteromultimer with MdtB.

The protein localises to the cell inner membrane. The protein is Multidrug resistance protein MdtC of Klebsiella pneumoniae (strain 342).